We begin with the raw amino-acid sequence, 273 residues long: Glutamate 5-kinase (273 aa).

K15 contributes to the ATP binding site. S55, D142, and N158 together coordinate substrate. Residues 178–179 (SD) and 220–226 (TGGMLSK) contribute to the ATP site.

It belongs to the glutamate 5-kinase family.

The protein resides in the cytoplasm. It catalyses the reaction L-glutamate + ATP = L-glutamyl 5-phosphate + ADP. Its pathway is amino-acid biosynthesis; L-proline biosynthesis; L-glutamate 5-semialdehyde from L-glutamate: step 1/2. Catalyzes the transfer of a phosphate group to glutamate to form L-glutamate 5-phosphate. This chain is Glutamate 5-kinase, found in Streptococcus pyogenes serotype M1.